The primary structure comprises 701 residues: Larval serum protein 2 (701 aa).

The first 21 residues, 1–21 (MKSFTVIALAAVALLATLGQA), serve as a signal peptide directing secretion. The N-linked (GlcNAc...) asparagine glycan is linked to asparagine 204.

The protein belongs to the hemocyanin family. Homohexamer.

Its subcellular location is the secreted. The protein resides in the extracellular space. Larval storage protein (LSP) which may serve as a store of amino acids for synthesis of adult proteins. This is Larval serum protein 2 (Lsp2) from Drosophila melanogaster (Fruit fly).